Here is a 294-residue protein sequence, read N- to C-terminus: Picrinine-N-methytransferase TMT2 (294 aa).

The interval 75-84 is SAM motif I; that stretch reads LLDVGCGLGG. The Vacuolar targeting signal motif lies at 137–143; it reads DGEFDVV. The segment at 138–146 is SAM motif II; the sequence is GEFDVVFTL. The interval 165 to 174 is SAM motif III; the sequence is VGSPGAAIVV.

It belongs to the class I-like SAM-binding methyltransferase superfamily. gTMT family. Homodimer.

The protein localises to the vacuole membrane. It carries out the reaction picrinine + S-adenosyl-L-methionine = ervincine + S-adenosyl-L-homocysteine + H(+). Its pathway is alkaloid biosynthesis; vindoline biosynthesis. S-adenosyl-L-methionine-dependent N-methyltransferase involved in the biosynthesis of biologically active monoterpenoid indole alkaloids (MIAs) natural products including vindoline. Catalyzes the conversion of picrinine to N-methylpicrinine (ervincine). The chain is Picrinine-N-methytransferase TMT2 from Catharanthus roseus (Madagascar periwinkle).